The primary structure comprises 298 residues: Mitochondrial 2-oxodicarboxylate carrier (298 aa).

3 Solcar repeats span residues 10–99 (HETC…YKKF), 106–195 (SPGL…VKDN), and 204–293 (LEFL…TYAW). 6 helical membrane passes run 16 to 36 (VAAGGCAGLVEICLMHPLDVV), 69 to 88 (FGFYKGIIPPILAETPKRAV), 112 to 132 (PIAGLGSGLTEAVVVNPFEVV), 166 to 186 (GLNKGFTATLGRHGIFNMTYF), 204 to 224 (LEFLRKFGIGFVSGTVGSVFN), and 276 to 296 (LGPGGGVMLLVYEYTYAWLQE).

The protein belongs to the mitochondrial carrier (TC 2.A.29) family. In terms of tissue distribution, widely expressed.

It localises to the mitochondrion inner membrane. The catalysed reaction is 2-oxoadipate(in) + 2-oxoglutarate(out) = 2-oxoadipate(out) + 2-oxoglutarate(in). The enzyme catalyses hexanedioate(in) + 2-oxoglutarate(out) = hexanedioate(out) + 2-oxoglutarate(in). It carries out the reaction L-2-aminoadipate(in) + 2-oxoglutarate(out) = L-2-aminoadipate(out) + 2-oxoglutarate(in). It catalyses the reaction glutarate(in) + 2-oxoglutarate(out) = glutarate(out) + 2-oxoglutarate(in). The catalysed reaction is 2-oxoheptanedioate(in) + 2-oxoglutarate(out) = 2-oxoheptanedioate(out) + 2-oxoglutarate(in). The enzyme catalyses heptanedioate(in) + 2-oxoglutarate(out) = heptanedioate(out) + 2-oxoglutarate(in). It carries out the reaction citrate(in) + 2-oxoglutarate(out) = citrate(out) + 2-oxoglutarate(in). Its function is as follows. Transports dicarboxylates across the inner membranes of mitochondria by a counter-exchange mechanism. Can transport 2-oxoadipate (2-oxohexanedioate), 2-oxoglutarate, adipate (hexanedioate), glutarate, and to a lesser extent, pimelate (heptanedioate), 2-oxopimelate (2-oxoheptanedioate), 2-aminoadipate (2-aminohexanedioate), oxaloacetate, and citrate. Plays a central role in catabolism of lysine, hydroxylysine, and tryptophan, by transporting common metabolite intermediates (such as 2-oxoadipate) into the mitochondria, where it is converted into acetyl-CoA and can enter the citric acid (TCA) cycle. This is Mitochondrial 2-oxodicarboxylate carrier (Slc25a21) from Rattus norvegicus (Rat).